We begin with the raw amino-acid sequence, 468 residues long: Acetyl-CoA decarbonylase/synthase complex subunit gamma 1 (468 aa).

The region spanning 1–61 is the 4Fe-4S domain; it reads MKINSPLEAY…YAKKLAELDR (61 aa). Residues Cys18, Cys21, Cys26, and Cys43 each contribute to the [4Fe-4S] cluster site.

Heterodimer of delta and gamma chains. The ACDS complex is made up of alpha, epsilon, beta, gamma and delta chains with a probable stoichiometry of (alpha(2)epsilon(2))(4)-beta(8)-(gamma(1)delta(1))(8). It depends on corrinoid as a cofactor. The cofactor is [4Fe-4S] cluster.

The catalysed reaction is 5,6,7,8-tetrahydrosarcinapterin + methyl-Co(III)-[corrinoid Fe-S protein] = 5-methyltetrahydrosarcinapterin + Co(I)-[corrinoid Fe-S protein] + H(+). Its pathway is one-carbon metabolism; methanogenesis from acetate. Its function is as follows. Part of a complex that catalyzes the reversible cleavage of acetyl-CoA, allowing growth on acetate as sole source of carbon and energy. This Methanosarcina thermophila protein is Acetyl-CoA decarbonylase/synthase complex subunit gamma 1.